The following is a 335-amino-acid chain: GTPase Obg (335 aa).

Residues 4 to 162 (GNFVDYTKIY…ADIVLELKVL (159 aa)) form the Obg domain. Positions 163–332 (ADVGLVGFPN…LKDKLWAMLN (170 aa)) constitute an OBG-type G domain. Residues 169–176 (GFPNAGKS), 194–198 (FTTLK), 216–219 (DIPG), 283–286 (SKCD), and 313–315 (SSI) contribute to the GTP site. The Mg(2+) site is built by serine 176 and threonine 196.

It belongs to the TRAFAC class OBG-HflX-like GTPase superfamily. OBG GTPase family. As to quaternary structure, monomer. Mg(2+) serves as cofactor.

It localises to the cytoplasm. Functionally, an essential GTPase which binds GTP, GDP and possibly (p)ppGpp with moderate affinity, with high nucleotide exchange rates and a fairly low GTP hydrolysis rate. Plays a role in control of the cell cycle, stress response, ribosome biogenesis and in those bacteria that undergo differentiation, in morphogenesis control. The protein is GTPase Obg of Flavobacterium psychrophilum (strain ATCC 49511 / DSM 21280 / CIP 103535 / JIP02/86).